The chain runs to 192 residues: Imidazoleglycerol-phosphate dehydratase (192 aa).

It belongs to the imidazoleglycerol-phosphate dehydratase family.

The protein localises to the cytoplasm. It catalyses the reaction D-erythro-1-(imidazol-4-yl)glycerol 3-phosphate = 3-(imidazol-4-yl)-2-oxopropyl phosphate + H2O. It functions in the pathway amino-acid biosynthesis; L-histidine biosynthesis; L-histidine from 5-phospho-alpha-D-ribose 1-diphosphate: step 6/9. This Staphylococcus saprophyticus subsp. saprophyticus (strain ATCC 15305 / DSM 20229 / NCIMB 8711 / NCTC 7292 / S-41) protein is Imidazoleglycerol-phosphate dehydratase.